The chain runs to 180 residues: UPF0227 protein PC1_2487 (180 aa).

It belongs to the UPF0227 family.

This is UPF0227 protein PC1_2487 from Pectobacterium carotovorum subsp. carotovorum (strain PC1).